The following is a 58-amino-acid chain: Potassium channel toxin alpha-KTx 26.2 (58 aa).

An N-terminal signal peptide occupies residues 1-19; that stretch reads MKTIFVVILVLFVLSAMLA. Disulfide bonds link cysteine 31–cysteine 49, cysteine 35–cysteine 54, and cysteine 39–cysteine 56.

The protein belongs to the short scorpion toxin superfamily. Potassium channel inhibitor family. Alpha-KTx 26 subfamily. As to expression, expressed by the venom gland.

Its subcellular location is the secreted. Functionally, inhibits voltage-gated potassium channels. In Lychas mucronatus (Chinese swimming scorpion), this protein is Potassium channel toxin alpha-KTx 26.2.